We begin with the raw amino-acid sequence, 113 residues long: U11-theraphotoxin-Hhn1q (113 aa).

The signal sequence occupies residues 1–21 (MNTVRVTFLLVFVLAVSLGQA). A propeptide spanning residues 22-74 (DKDENRMEMQEKTEQGKSYLDFAENLLLQKLEELEAKLLEEDSEESRNSRQKR) is cleaved from the precursor. Residues 61–82 (EEDSEESRNSRQKRCIGEGVPC) are disordered. Cystine bridges form between Cys-75-Cys-90, Cys-82-Cys-95, and Cys-89-Cys-110.

It belongs to the neurotoxin 14 (magi-1) family. 01 (HNTX-16) subfamily. As to expression, expressed by the venom gland.

It is found in the secreted. Its function is as follows. Probable ion channel inhibitor. This chain is U11-theraphotoxin-Hhn1q, found in Cyriopagopus hainanus (Chinese bird spider).